A 99-amino-acid polypeptide reads, in one-letter code: MKTLCLLFAVLCLVTWTQARGAEVEENLTAQDGEVDIAGDNGDVQLTLNTDDFESFTLKTLTLGHPRVKRHSCVCRRICAARQVRKGRCSRRRRICCLY.

Positions 1–21 (MKTLCLLFAVLCLVTWTQARG) are cleaved as a signal peptide. A propeptide spanning residues 22–68 (AEVEENLTAQDGEVDIAGDNGDVQLTLNTDDFESFTLKTLTLGHPRV) is cleaved from the precursor. 3 disulfides stabilise this stretch: Cys73/Cys97, Cys75/Cys89, and Cys79/Cys96.

Belongs to the alpha-defensin family. Lowly expressed in spleen, and expressed at lower levels in kidney and lung.

The protein localises to the secreted. Its function is as follows. Has antimicrobial activity. The sequence is that of Defensin-A4 from Ornithorhynchus anatinus (Duckbill platypus).